An 86-amino-acid polypeptide reads, in one-letter code: Centromere protein W (86 aa).

This sequence belongs to the CENP-W/WIP1 family. As to quaternary structure, heterodimer with CENPT; this dimer coassembles with CENPS-CENPX heterodimers at centromeres to form the tetrameric CENP-T-W-S-X complex, which is a subcomplex of the large constitutive centromere-associated network (CCAN, also known as the interphase centromere complex or ICEN). Interacts with NPM1.

Its subcellular location is the nucleus. It is found in the chromosome. The protein resides in the centromere. The protein localises to the kinetochore. It localises to the nucleus matrix. Its subcellular location is the nucleolus. Its function is as follows. Component of the CENPA-NAC (nucleosome-associated) complex, a complex that plays a central role in assembly of kinetochore proteins, mitotic progression and chromosome segregation. The CENPA-NAC complex recruits the CENPA-CAD (nucleosome distal) complex and may be involved in incorporation of newly synthesized CENPA into centromeres. Part of a nucleosome-associated complex that binds specifically to histone H3-containing nucleosomes at the centromere, as opposed to nucleosomes containing CENPA. Component of the heterotetrameric CENP-T-W-S-X complex that binds and supercoils DNA, and plays an important role in kinetochore assembly. CENPW has a fundamental role in kinetochore assembly and function. It is one of the inner kinetochore proteins, with most further proteins binding downstream. Required for normal chromosome organization and normal progress through mitosis. In Mus musculus (Mouse), this protein is Centromere protein W (Cenpw).